The chain runs to 272 residues: Formamidopyrimidine-DNA glycosylase (272 aa).

Catalysis depends on P2, which acts as the Schiff-base intermediate with DNA. Residue E3 is the Proton donor of the active site. K58 (proton donor; for beta-elimination activity) is an active-site residue. DNA is bound by residues H91, R111, and R153. An FPG-type zinc finger spans residues 238 to 272 (AVYGRANKACVICSKPLKEIRQAQRSTVFCINCQS). Residue R262 is the Proton donor; for delta-elimination activity of the active site.

This sequence belongs to the FPG family. Monomer. The cofactor is Zn(2+).

The enzyme catalyses Hydrolysis of DNA containing ring-opened 7-methylguanine residues, releasing 2,6-diamino-4-hydroxy-5-(N-methyl)formamidopyrimidine.. The catalysed reaction is 2'-deoxyribonucleotide-(2'-deoxyribose 5'-phosphate)-2'-deoxyribonucleotide-DNA = a 3'-end 2'-deoxyribonucleotide-(2,3-dehydro-2,3-deoxyribose 5'-phosphate)-DNA + a 5'-end 5'-phospho-2'-deoxyribonucleoside-DNA + H(+). Functionally, involved in base excision repair of DNA damaged by oxidation or by mutagenic agents. Acts as a DNA glycosylase that recognizes and removes damaged bases. Has a preference for oxidized purines, such as 7,8-dihydro-8-oxoguanine (8-oxoG). Has AP (apurinic/apyrimidinic) lyase activity and introduces nicks in the DNA strand. Cleaves the DNA backbone by beta-delta elimination to generate a single-strand break at the site of the removed base with both 3'- and 5'-phosphates. This Marinomonas sp. (strain MWYL1) protein is Formamidopyrimidine-DNA glycosylase.